Here is a 942-residue protein sequence, read N- to C-terminus: E3 ubiquitin-protein ligase HACE1 (942 aa).

ANK repeat units lie at residues 23 to 55 (LPDDNETAVYTLMPMVMADQHRSVSELLSNSKF), 64 to 93 (VKRSLLHIAANCGSVECLVLLLKKGANPNY), 97 to 126 (SGCTPLHLAARNGQKKCMSKLLEYSADVNI), 130 to 159 (EGLTAIHWLAVNGRTELLHDLVQHVSNVDV), 163 to 192 (MGQTALHVACQNGHKTTVQCLLDSGADINR), 196 to 226 (SGATPLYFACSHGQRDTAQILLMRGAKYLPD), and 228 to 253 (NGITPLDLCVQGGYGETCEVLIQYHP). The disordered stretch occupies residues 428–459 (KGPDHQDATPTPSFAAAGTESRKELSTDTGDS). Over residues 447–459 (ESRKELSTDTGDS) the composition is skewed to basic and acidic residues. One can recognise an HECT domain in the interval 607–942 (NCAKLKQGIA…HCGSYGYTMA (336 aa)). The Glycyl thioester intermediate role is filled by C909.

It is found in the golgi apparatus. The protein localises to the golgi stack membrane. The protein resides in the cytoplasm. Its subcellular location is the endoplasmic reticulum. It catalyses the reaction S-ubiquitinyl-[E2 ubiquitin-conjugating enzyme]-L-cysteine + [acceptor protein]-L-lysine = [E2 ubiquitin-conjugating enzyme]-L-cysteine + N(6)-ubiquitinyl-[acceptor protein]-L-lysine.. Its pathway is protein modification; protein ubiquitination. Its function is as follows. E3 ubiquitin-protein ligase involved in Golgi membrane fusion and regulation of small GTPases. Acts as a regulator of Golgi membrane dynamics during the cell cycle: recruited to Golgi membrane by Rab proteins and regulates postmitotic Golgi membrane fusion. Acts by mediating ubiquitination during mitotic Golgi disassembly, ubiquitination serving as a signal for Golgi reassembly later, after cell division. In Gallus gallus (Chicken), this protein is E3 ubiquitin-protein ligase HACE1 (HACE1).